The sequence spans 405 residues: Enoyl-[acyl-carrier-protein] reductase [NADH] (405 aa).

NAD(+) is bound by residues 51–56 (GASSGY), 77–78 (FE), 114–115 (DA), and 142–143 (LA). Residue Y228 coordinates substrate. The active-site Proton donor is the Y238. NAD(+) is bound by residues K247 and 276–278 (VVT).

Belongs to the TER reductase family. In terms of assembly, monomer.

The enzyme catalyses a 2,3-saturated acyl-[ACP] + NAD(+) = a (2E)-enoyl-[ACP] + NADH + H(+). It participates in lipid metabolism; fatty acid biosynthesis. Its function is as follows. Involved in the final reduction of the elongation cycle of fatty acid synthesis (FAS II). Catalyzes the reduction of a carbon-carbon double bond in an enoyl moiety that is covalently linked to an acyl carrier protein (ACP). The chain is Enoyl-[acyl-carrier-protein] reductase [NADH] from Chromohalobacter salexigens (strain ATCC BAA-138 / DSM 3043 / CIP 106854 / NCIMB 13768 / 1H11).